Here is a 141-residue protein sequence, read N- to C-terminus: Hemoglobin subunit alpha-1/2 (141 aa).

Positions 1–141 constitute a Globin domain; it reads VLSPADKTNV…VSTVLTSKYR (141 aa). Serine 3 carries the phosphoserine modification. Residue lysine 7 is modified to N6-succinyllysine. At threonine 8 the chain carries Phosphothreonine. Lysine 11 is subject to N6-succinyllysine. Lysine 16 is subject to N6-acetyllysine; alternate. At lysine 16 the chain carries N6-succinyllysine; alternate. Phosphotyrosine is present on tyrosine 24. Serine 35 carries the phosphoserine modification. At lysine 40 the chain carries N6-succinyllysine. Residue serine 49 is modified to Phosphoserine. Histidine 58 serves as a coordination point for O2. Histidine 87 contacts heme b. Serine 102 is modified (phosphoserine). At threonine 108 the chain carries Phosphothreonine. Phosphoserine is present on residues serine 124 and serine 131. Phosphothreonine occurs at positions 134 and 137. A Phosphoserine modification is found at serine 138.

It belongs to the globin family. As to quaternary structure, heterotetramer of two alpha chains and two beta chains. Red blood cells.

Functionally, involved in oxygen transport from the lung to the various peripheral tissues. This is Hemoglobin subunit alpha-1/2 from Macaca speciosa (Stump-tail macaque).